The primary structure comprises 331 residues: Ketol-acid reductoisomerase (NADP(+)) (331 aa).

One can recognise a KARI N-terminal Rossmann domain in the interval 4–183 (ATIYYDDDAE…GCTRAGVVET (180 aa)). Residues 27 to 30 (YGSQ), R50, S53, S55, and 85 to 88 (DTVQ) each bind NADP(+). Residue H109 is part of the active site. Residue G135 coordinates NADP(+). The 146-residue stretch at 184–329 (TFREETETDL…EDLRALFAWG (146 aa)) folds into the KARI C-terminal knotted domain. Positions 192, 196, 228, and 232 each coordinate Mg(2+). S253 lines the substrate pocket.

It belongs to the ketol-acid reductoisomerase family. Requires Mg(2+) as cofactor.

The enzyme catalyses (2R)-2,3-dihydroxy-3-methylbutanoate + NADP(+) = (2S)-2-acetolactate + NADPH + H(+). It catalyses the reaction (2R,3R)-2,3-dihydroxy-3-methylpentanoate + NADP(+) = (S)-2-ethyl-2-hydroxy-3-oxobutanoate + NADPH + H(+). It functions in the pathway amino-acid biosynthesis; L-isoleucine biosynthesis; L-isoleucine from 2-oxobutanoate: step 2/4. Its pathway is amino-acid biosynthesis; L-valine biosynthesis; L-valine from pyruvate: step 2/4. Involved in the biosynthesis of branched-chain amino acids (BCAA). Catalyzes an alkyl-migration followed by a ketol-acid reduction of (S)-2-acetolactate (S2AL) to yield (R)-2,3-dihydroxy-isovalerate. In the isomerase reaction, S2AL is rearranged via a Mg-dependent methyl migration to produce 3-hydroxy-3-methyl-2-ketobutyrate (HMKB). In the reductase reaction, this 2-ketoacid undergoes a metal-dependent reduction by NADPH to yield (R)-2,3-dihydroxy-isovalerate. The sequence is that of Ketol-acid reductoisomerase (NADP(+)) from Natronomonas pharaonis (strain ATCC 35678 / DSM 2160 / CIP 103997 / JCM 8858 / NBRC 14720 / NCIMB 2260 / Gabara) (Halobacterium pharaonis).